Here is a 118-residue protein sequence, read N- to C-terminus: NADPH-dependent 7-cyano-7-deazaguanine reductase (118 aa).

Cys31 (thioimide intermediate) is an active-site residue. The active-site Proton donor is Asp38. Substrate contacts are provided by residues 53–55 (IEL) and 72–73 (YE).

The protein belongs to the GTP cyclohydrolase I family. QueF type 1 subfamily.

The protein localises to the cytoplasm. The catalysed reaction is 7-aminomethyl-7-carbaguanine + 2 NADP(+) = 7-cyano-7-deazaguanine + 2 NADPH + 3 H(+). It functions in the pathway tRNA modification; tRNA-queuosine biosynthesis. Catalyzes the NADPH-dependent reduction of 7-cyano-7-deazaguanine (preQ0) to 7-aminomethyl-7-deazaguanine (preQ1). In Prosthecochloris aestuarii (strain DSM 271 / SK 413), this protein is NADPH-dependent 7-cyano-7-deazaguanine reductase.